The primary structure comprises 293 residues: Probable flavonol synthase 6 (293 aa).

Residues 156–253 (KAQYVMRINY…RMSWPILVEP (98 aa)) enclose the Fe2OG dioxygenase domain. Residue 164 to 166 (NYY) coordinates 2-oxoglutarate. 3 residues coordinate Fe cation: histidine 178, aspartate 180, and histidine 234. 2-oxoglutarate is bound at residue 244–246 (RMS).

It belongs to the iron/ascorbate-dependent oxidoreductase family. It depends on Fe(2+) as a cofactor.

The enzyme catalyses a (2R,3R)-dihydroflavonol + 2-oxoglutarate + O2 = a flavonol + succinate + CO2 + H2O. It participates in secondary metabolite biosynthesis; flavonoid biosynthesis. This Arabidopsis thaliana (Mouse-ear cress) protein is Probable flavonol synthase 6 (FLS6).